The chain runs to 80 residues: Defensin-like protein 204 (80 aa).

An N-terminal signal peptide occupies residues 1–29; it reads MAKTFSSICFTTLLLVVLFISTEIPKSEA. 3 cysteine pairs are disulfide-bonded: cysteine 43/cysteine 64, cysteine 48/cysteine 73, and cysteine 52/cysteine 75.

It belongs to the DEFL family.

It localises to the secreted. The protein is Defensin-like protein 204 of Arabidopsis thaliana (Mouse-ear cress).